Here is a 162-residue protein sequence, read N- to C-terminus: Xylulose kinase (162 aa).

Positions Gly-16–Gln-39 are disordered. The segment covering Ala-20–Ala-33 has biased composition (low complexity).

Belongs to the FGGY kinase family.

It carries out the reaction D-xylulose + ATP = D-xylulose 5-phosphate + ADP + H(+). In terms of biological role, catalyzes the phosphorylation of D-xylulose to D-xylulose 5-phosphate. This chain is Xylulose kinase, found in Actinoplanes sp. (strain ATCC 31351 / 3876) (Ampullariella sp.).